A 507-amino-acid polypeptide reads, in one-letter code: Protein phosphatase 1J (507 aa).

2 disordered regions span residues 1–102 (MLNR…RLPW) and 197–220 (LCLP…PQSC). Residues 14–23 (SSGGTSSQRS) show a composition bias toward low complexity. Thr-41 carries the phosphothreonine modification. Polar residues predominate over residues 59–73 (TAETTVSFSRPTFLQ). Ser-65 and Ser-75 each carry phosphoserine. In terms of domain architecture, PPM-type phosphatase spans 103-499 (STGYAEVINA…DDISVFVIPL (397 aa)). Over residues 199–212 (LPSTPGTPGAPSPS) the composition is skewed to low complexity.

Belongs to the PP2C family. Interacts with UBE2I/UBC9. In terms of tissue distribution, specifically expressed in the testicular germ cells.

The catalysed reaction is O-phospho-L-seryl-[protein] + H2O = L-seryl-[protein] + phosphate. It carries out the reaction O-phospho-L-threonyl-[protein] + H2O = L-threonyl-[protein] + phosphate. This chain is Protein phosphatase 1J (Ppm1j), found in Mus musculus (Mouse).